The following is a 267-amino-acid chain: Probable 6-oxopurine nucleoside phosphorylase (267 aa).

Phosphate-binding positions include S10, R50–H51, and S83–A84. M188 lines the substrate pocket. Residue T189 participates in phosphate binding. N212–A214 is a substrate binding site.

The protein belongs to the PNP/MTAP phosphorylase family. MTAP subfamily. As to quaternary structure, homohexamer. Dimer of a homotrimer.

It carries out the reaction a purine D-ribonucleoside + phosphate = a purine nucleobase + alpha-D-ribose 1-phosphate. It catalyses the reaction guanosine + phosphate = alpha-D-ribose 1-phosphate + guanine. The catalysed reaction is inosine + phosphate = alpha-D-ribose 1-phosphate + hypoxanthine. Its pathway is purine metabolism; purine nucleoside salvage. Functionally, purine nucleoside phosphorylase which is highly specific for 6-oxopurine nucleosides. Cleaves guanosine or inosine to respective bases and sugar-1-phosphate molecules. Involved in purine salvage. The protein is Probable 6-oxopurine nucleoside phosphorylase of Thermococcus kodakarensis (strain ATCC BAA-918 / JCM 12380 / KOD1) (Pyrococcus kodakaraensis (strain KOD1)).